The following is a 221-amino-acid chain: Iron-sulfur cluster assembly SufBD family protein ycf24 (221 aa).

The protein belongs to the iron-sulfur cluster assembly SufBD family.

Its subcellular location is the plastid. The protein localises to the chloroplast. This chain is Iron-sulfur cluster assembly SufBD family protein ycf24 (ycf24), found in Galdieria sulphuraria (Red alga).